The chain runs to 765 residues: SNF-related serine/threonine-protein kinase (765 aa).

The Protein kinase domain maps to 16–269 (YDLDKTLGRG…LEEIENHPWL (254 aa)). ATP is bound by residues 22–30 (LGRGHFAVV) and Lys45. Asp139 (proton acceptor) is an active-site residue. Ser162 carries the phosphoserine modification. Thr173 is modified (phosphothreonine; by LKB1). Positions 291–334 (SEEEHNSIIQRMVLGDIADRDAIVEALETNRYNHITATYFLLAE) constitute a UBA domain. A phosphoserine mark is found at Ser362, Ser390, Ser482, Ser495, and Ser518. Positions 512–634 (LKMNIASPGT…RCAGPSNSMQ (123 aa)) are disordered. Residues 522 to 532 (VHKRYHRRKSQ) are compositionally biased toward basic residues. Over residues 533–542 (GRGSSCSSSE) the composition is skewed to low complexity. The residue at position 534 (Arg534) is an Omega-N-methylarginine. Basic and acidic residues predominate over residues 549 to 558 (ESRRRLDKDS). The span at 603 to 614 (AGGGSPSSGSGG) shows a compositional bias: gly residues. Position 607 is a phosphoserine (Ser607).

Belongs to the protein kinase superfamily. CAMK Ser/Thr protein kinase family. It depends on Mg(2+) as a cofactor. Autophosphorylated. Phosphorylation on Thr-173 by STK11/LKB1 in complex with STE20-related adapter-alpha (STRADA) pseudo kinase and CAB39. In terms of tissue distribution, expressed in hematopoietic progenitor cells and leukemic cell lines. Weakly expressed in the testis.

The protein resides in the nucleus. It catalyses the reaction L-seryl-[protein] + ATP = O-phospho-L-seryl-[protein] + ADP + H(+). It carries out the reaction L-threonyl-[protein] + ATP = O-phospho-L-threonyl-[protein] + ADP + H(+). Activated by phosphorylation on Thr-173. Its function is as follows. May play a role in hematopoietic cell proliferation or differentiation. Potential mediator of neuronal apoptosis. The protein is SNF-related serine/threonine-protein kinase of Homo sapiens (Human).